A 101-amino-acid polypeptide reads, in one-letter code: Small ribosomal subunit protein uS14 (101 aa).

It belongs to the universal ribosomal protein uS14 family. As to quaternary structure, part of the 30S ribosomal subunit. Contacts proteins S3 and S10.

In terms of biological role, binds 16S rRNA, required for the assembly of 30S particles and may also be responsible for determining the conformation of the 16S rRNA at the A site. This Stutzerimonas stutzeri (strain A1501) (Pseudomonas stutzeri) protein is Small ribosomal subunit protein uS14.